Reading from the N-terminus, the 99-residue chain is NADH-quinone oxidoreductase subunit K (99 aa).

The next 3 helical transmembrane spans lie at 3–23, 28–48, and 59–79; these read PANY…GVLV, IVVF…LVTF, and VMAF…LAII.

Belongs to the complex I subunit 4L family. As to quaternary structure, NDH-1 is composed of 14 different subunits. Subunits NuoA, H, J, K, L, M, N constitute the membrane sector of the complex.

The protein resides in the cell membrane. The catalysed reaction is a quinone + NADH + 5 H(+)(in) = a quinol + NAD(+) + 4 H(+)(out). Functionally, NDH-1 shuttles electrons from NADH, via FMN and iron-sulfur (Fe-S) centers, to quinones in the respiratory chain. The immediate electron acceptor for the enzyme in this species is believed to be a menaquinone. Couples the redox reaction to proton translocation (for every two electrons transferred, four hydrogen ions are translocated across the cytoplasmic membrane), and thus conserves the redox energy in a proton gradient. This is NADH-quinone oxidoreductase subunit K from Frankia alni (strain DSM 45986 / CECT 9034 / ACN14a).